The following is a 200-amino-acid chain: Cytochrome c biogenesis ATP-binding export protein CcmA (200 aa).

The ABC transporter domain maps to Met1–Ala199. Gly35 to Thr42 is an ATP binding site.

This sequence belongs to the ABC transporter superfamily. CcmA exporter (TC 3.A.1.107) family. As to quaternary structure, the complex is composed of two ATP-binding proteins (CcmA) and two transmembrane proteins (CcmB).

The protein localises to the cell inner membrane. The catalysed reaction is heme b(in) + ATP + H2O = heme b(out) + ADP + phosphate + H(+). Functionally, part of the ABC transporter complex CcmAB involved in the biogenesis of c-type cytochromes; once thought to export heme, this seems not to be the case, but its exact role is uncertain. Responsible for energy coupling to the transport system. This Rhodopseudomonas palustris (strain BisB18) protein is Cytochrome c biogenesis ATP-binding export protein CcmA.